The primary structure comprises 200 residues: Endoribonuclease YbeY (200 aa).

The segment covering 1–18 (MPADPALPDPVPPGPTAP) has biased composition (pro residues). The tract at residues 1-22 (MPADPALPDPVPPGPTAPVPTD) is disordered. Residues histidine 151, histidine 155, and histidine 161 each contribute to the Zn(2+) site.

It belongs to the endoribonuclease YbeY family. Zn(2+) serves as cofactor.

The protein localises to the cytoplasm. Single strand-specific metallo-endoribonuclease involved in late-stage 70S ribosome quality control and in maturation of the 3' terminus of the 16S rRNA. The polypeptide is Endoribonuclease YbeY (Rhodospirillum rubrum (strain ATCC 11170 / ATH 1.1.1 / DSM 467 / LMG 4362 / NCIMB 8255 / S1)).